Consider the following 444-residue polypeptide: L-seryl-tRNA(Sec) selenium transferase (444 aa).

An N6-(pyridoxal phosphate)lysine modification is found at Lys-284.

It belongs to the SelA family. The cofactor is pyridoxal 5'-phosphate.

It is found in the cytoplasm. It carries out the reaction L-seryl-tRNA(Sec) + selenophosphate + H(+) = L-selenocysteinyl-tRNA(Sec) + phosphate. It participates in aminoacyl-tRNA biosynthesis; selenocysteinyl-tRNA(Sec) biosynthesis; selenocysteinyl-tRNA(Sec) from L-seryl-tRNA(Sec) (bacterial route): step 1/1. Functionally, converts seryl-tRNA(Sec) to selenocysteinyl-tRNA(Sec) required for selenoprotein biosynthesis. The polypeptide is L-seryl-tRNA(Sec) selenium transferase (Wolinella succinogenes (strain ATCC 29543 / DSM 1740 / CCUG 13145 / JCM 31913 / LMG 7466 / NCTC 11488 / FDC 602W) (Vibrio succinogenes)).